The sequence spans 180 residues: Telokin-like protein 20 (180 aa).

The tract at residues 112-180 (SKTDAAVHTS…KQKLDNAKQD (69 aa)) is disordered. Acidic residues predominate over residues 156–165 (DFEENIDDGD).

This chain is Telokin-like protein 20 (TLP20), found in Lepidoptera (butterflies and moths).